The following is a 549-amino-acid chain: Biotin-dependent acetyl-/propionyl-coenzyme A carboxylase beta5 subunit (549 aa).

In terms of domain architecture, CoA carboxyltransferase N-terminal spans 25–281 (TAGKLAELHK…NNFTDAPRYS (257 aa)). One can recognise a CoA carboxyltransferase C-terminal domain in the interval 295-542 (AKDLELDTLI…ERKIAHLPPK (248 aa)).

The protein belongs to the AccD/PCCB family. In terms of assembly, the biotin-dependent acyl-CoA carboxylase complex is composed of AccA3, which contains the biotin carboxylase (BC) and biotin carboxyl carrier protein (BCCP) domains, and AccD5, which contains the carboxyl transferase (CT) domain.

It carries out the reaction N(6)-carboxybiotinyl-L-lysyl-[protein] + acetyl-CoA = N(6)-biotinyl-L-lysyl-[protein] + malonyl-CoA. It catalyses the reaction N(6)-carboxybiotinyl-L-lysyl-[protein] + propanoyl-CoA = methylmalonyl-CoA + N(6)-biotinyl-L-lysyl-[protein]. The protein operates within lipid metabolism; mycolic acid biosynthesis. Functionally, component of a biotin-dependent acyl-CoA carboxylase complex. This subunit transfers the CO2 from carboxybiotin to the CoA ester substrate. When associated with the alpha3 subunit AccA3, is involved in the carboxylation of acetyl-CoA and propionyl-CoA. This is Biotin-dependent acetyl-/propionyl-coenzyme A carboxylase beta5 subunit (accD5) from Mycobacterium leprae (strain TN).